The sequence spans 218 residues: Trichothecene biosynthesis transcription regulator TRI6 (218 aa).

Residues 154-181 are disordered; that stretch reads SQSTNDPGDAGKKGFATRKDRARHEAKH. A compositionally biased stretch (basic and acidic residues) spans 162–176; the sequence is DAGKKGFATRKDRAR. A C2H2-type zinc finger spans residues 185–215; sequence IRCQWRDNNGDQCTRTFSRMDNMRDHFRRIH.

It localises to the nucleus. In terms of biological role, transcriptional activator of part of the trichothecene biosynthesis cluster that mediates the production of the antimicrobial trichothecene harzianum A (HA) that plays a role in Botrytis cinerea antagonistic activity and plant defense priming. Regulates expression of both trichothecene and mevalonate pathway genes. In Trichoderma arundinaceum, this protein is Trichothecene biosynthesis transcription regulator TRI6.